The sequence spans 186 residues: Ribosome-recycling factor (186 aa).

Belongs to the RRF family.

The protein localises to the cytoplasm. In terms of biological role, responsible for the release of ribosomes from messenger RNA at the termination of protein biosynthesis. May increase the efficiency of translation by recycling ribosomes from one round of translation to another. This Rickettsia akari (strain Hartford) protein is Ribosome-recycling factor.